Here is an 81-residue protein sequence, read N- to C-terminus: RNA-binding protein Hfq (81 aa).

The Sm domain occupies 11-71 (DIFLNSARKN…VSTITPLRPI (61 aa)).

Belongs to the Hfq family. In terms of assembly, homohexamer.

Functionally, RNA chaperone that binds small regulatory RNA (sRNAs) and mRNAs to facilitate mRNA translational regulation in response to envelope stress, environmental stress and changes in metabolite concentrations. Also binds with high specificity to tRNAs. This chain is RNA-binding protein Hfq, found in Clostridium acetobutylicum (strain ATCC 824 / DSM 792 / JCM 1419 / IAM 19013 / LMG 5710 / NBRC 13948 / NRRL B-527 / VKM B-1787 / 2291 / W).